The following is a 136-amino-acid chain: Group 1 truncated hemoglobin GlbN (136 aa).

Residue His-81 coordinates heme.

It belongs to the truncated hemoglobin family. Group I subfamily. In terms of assembly, homodimer. Heme serves as cofactor.

In terms of biological role, binds oxygen cooperatively with very high affinity because of a fast combination and a slow dissociation rate. In Mycolicibacterium paratuberculosis (strain ATCC BAA-968 / K-10) (Mycobacterium paratuberculosis), this protein is Group 1 truncated hemoglobin GlbN (glbN).